We begin with the raw amino-acid sequence, 219 residues long: 7-cyano-7-deazaguanine synthase (219 aa).

Residue 10–20 (FSGGQDSTTCL) coordinates ATP. Zn(2+) contacts are provided by Cys-188, Cys-197, Cys-200, and Cys-203.

This sequence belongs to the QueC family. In terms of assembly, homodimer. Zn(2+) serves as cofactor.

It carries out the reaction 7-carboxy-7-deazaguanine + NH4(+) + ATP = 7-cyano-7-deazaguanine + ADP + phosphate + H2O + H(+). Its pathway is purine metabolism; 7-cyano-7-deazaguanine biosynthesis. In terms of biological role, catalyzes the ATP-dependent conversion of 7-carboxy-7-deazaguanine (CDG) to 7-cyano-7-deazaguanine (preQ(0)). In Clostridium botulinum (strain Langeland / NCTC 10281 / Type F), this protein is 7-cyano-7-deazaguanine synthase.